Reading from the N-terminus, the 124-residue chain is Small ribosomal subunit protein uS12 (124 aa).

The interval 1 to 24 (MPTINQLVRQGRKKSVKKTNTPAL) is disordered. At Asp-89 the chain carries 3-methylthioaspartic acid.

This sequence belongs to the universal ribosomal protein uS12 family. As to quaternary structure, part of the 30S ribosomal subunit. Contacts proteins S8 and S17. May interact with IF1 in the 30S initiation complex.

Its function is as follows. With S4 and S5 plays an important role in translational accuracy. Functionally, interacts with and stabilizes bases of the 16S rRNA that are involved in tRNA selection in the A site and with the mRNA backbone. Located at the interface of the 30S and 50S subunits, it traverses the body of the 30S subunit contacting proteins on the other side and probably holding the rRNA structure together. The combined cluster of proteins S8, S12 and S17 appears to hold together the shoulder and platform of the 30S subunit. The polypeptide is Small ribosomal subunit protein uS12 (Desulfotalea psychrophila (strain LSv54 / DSM 12343)).